The primary structure comprises 186 residues: UPF0200 protein PF1294 (186 aa).

Residue 7–14 (GMPGSGKG) participates in ATP binding.

It belongs to the UPF0200 family.

This Pyrococcus furiosus (strain ATCC 43587 / DSM 3638 / JCM 8422 / Vc1) protein is UPF0200 protein PF1294.